A 178-amino-acid chain; its full sequence is Cytochrome b6-f complex iron-sulfur subunit (178 aa).

A helical membrane pass occupies residues 20-42; that stretch reads LLTFGTATGVALGALYPVANYFM. The 97-residue stretch at 65–161 folds into the Rieske domain; the sequence is KTGWLANHQA…VDVDDDAVLV (97 aa). Residues cysteine 107, histidine 109, cysteine 125, and histidine 128 each contribute to the [2Fe-2S] cluster site. Residues cysteine 112 and cysteine 127 are joined by a disulfide bond.

Belongs to the Rieske iron-sulfur protein family. The 4 large subunits of the cytochrome b6-f complex are cytochrome b6, subunit IV (17 kDa polypeptide, PetD), cytochrome f and the Rieske protein, while the 4 small subunits are PetG, PetL, PetM and PetN. The complex functions as a dimer. It depends on [2Fe-2S] cluster as a cofactor.

Its subcellular location is the cellular thylakoid membrane. The catalysed reaction is 2 oxidized [plastocyanin] + a plastoquinol + 2 H(+)(in) = 2 reduced [plastocyanin] + a plastoquinone + 4 H(+)(out). Its function is as follows. Component of the cytochrome b6-f complex, which mediates electron transfer between photosystem II (PSII) and photosystem I (PSI), cyclic electron flow around PSI, and state transitions. This chain is Cytochrome b6-f complex iron-sulfur subunit, found in Prochlorococcus marinus (strain MIT 9515).